The chain runs to 238 residues: Small ribosomal subunit protein eS4 (238 aa).

The S4 RNA-binding domain maps to 38–110 (LPLAIIIRDV…EKKYYALIPI (73 aa)).

It belongs to the eukaryotic ribosomal protein eS4 family.

The sequence is that of Small ribosomal subunit protein eS4 from Pyrobaculum islandicum (strain DSM 4184 / JCM 9189 / GEO3).